The primary structure comprises 655 residues: ATP-dependent RNA helicase mss116, mitochondrial (655 aa).

The transit peptide at 1 to 56 (MMLGAVRRYGVVHALRASVPRTICRPSNSQLLRCQTSPVTACPQSVRLLHKSSPFF) directs the protein to the mitochondrion. Positions 84-113 (DLAERGLVDPKIIRAIVKDMNIKTMTDVQS) match the Q motif motif. A Helicase ATP-binding domain is found at 116–307 (LREILQGDDV…RKTMKPNFKF (192 aa)). Residue 129–136 (AKTGTGKT) coordinates ATP. The DEAD box motif lies at 251 to 254 (DEAD). A Helicase C-terminal domain is found at 341–503 (EFVTKYVEGE…TFATATVDMT (163 aa)). Positions 594 to 642 (YRGSSDNMSTRPDYRGGDRDMWASNSRRGREFNSDRRESRFGNHRNADD) are disordered. 2 stretches are compositionally biased toward basic and acidic residues: residues 605 to 614 (PDYRGGDRDM) and 621 to 642 (RGRE…NADD).

Belongs to the DEAD box helicase family. DDX18/HAS1 subfamily.

The protein resides in the mitochondrion matrix. The catalysed reaction is ATP + H2O = ADP + phosphate + H(+). Functionally, ATP-dependent RNA helicase required for mitochondrial splicing of group I and II introns. Also required for efficient mitochondrial translation. This chain is ATP-dependent RNA helicase mss116, mitochondrial (mss116), found in Aspergillus fumigatus (strain ATCC MYA-4609 / CBS 101355 / FGSC A1100 / Af293) (Neosartorya fumigata).